Here is a 196-residue protein sequence, read N- to C-terminus: Large ribosomal subunit protein mL66 (196 aa).

The N-terminal 34 residues, 1–34 (MAALRRLVSGCGRQLQAFLAGPAATGWLWLPARG), are a transit peptide targeting the mitochondrion.

The protein belongs to the bacterial ribosomal protein bS18 family. Mitochondrion-specific ribosomal protein mL66 subfamily. As to quaternary structure, component of the mitochondrial ribosome small subunit (28S) which comprises a 12S rRNA and about 30 distinct proteins.

It localises to the mitochondrion. This is Large ribosomal subunit protein mL66 (Mrps18a) from Mus musculus (Mouse).